The following is a 147-amino-acid chain: 16 kDa phloem protein 2 (147 aa).

Residues 1–103 form the C2 domain; it reads MPHGTLEVVL…FVEGSIPPTA (103 aa). Asp-20, Asp-26, Asp-73, Asp-75, and Asp-81 together coordinate Ca(2+). The segment at 126-147 is disordered; that stretch reads ENRSRGMDEESYGGWKNSEASY.

Ca(2+) is required as a cofactor.

In terms of biological role, binds to both sense and antisense RNA. Can also bind sheared DNA and dodecamer DNA with a low affinity. Interacts with mesophyll plasmodesmata to mediate its own cell-to-cell transport and potentiate RNA trafficking. May play a role in plant defense signaling. The chain is 16 kDa phloem protein 2 from Arabidopsis thaliana (Mouse-ear cress).